The sequence spans 170 residues: uncharacterized protein (170 aa).

The first 26 residues, 1 to 26, serve as a signal peptide directing secretion; it reads MLKKKWMVGLLAGCLAAGGFSYNAFA.

This is an uncharacterized protein from Bacillus subtilis (strain 168).